Consider the following 484-residue polypeptide: Ferrochelatase-2, chloroplastic (484 aa).

It belongs to the ferrochelatase family.

It is found in the plastid. It localises to the chloroplast. It carries out the reaction heme b + 2 H(+) = protoporphyrin IX + Fe(2+). The protein operates within porphyrin-containing compound metabolism; protoheme biosynthesis; protoheme from protoporphyrin-IX: step 1/1. Functionally, catalyzes the ferrous insertion into protoporphyrin IX. This chain is Ferrochelatase-2, chloroplastic (HEMH), found in Hordeum vulgare (Barley).